Reading from the N-terminus, the 346-residue chain is tRNA N6-adenosine threonylcarbamoyltransferase (346 aa).

Fe cation contacts are provided by His111 and His115. Residues 134–138 (LVSGG), Asp167, Gly180, and Asn279 contribute to the substrate site. A Fe cation-binding site is contributed by Asp307.

The protein belongs to the KAE1 / TsaD family. Fe(2+) is required as a cofactor.

The protein localises to the cytoplasm. It carries out the reaction L-threonylcarbamoyladenylate + adenosine(37) in tRNA = N(6)-L-threonylcarbamoyladenosine(37) in tRNA + AMP + H(+). In terms of biological role, required for the formation of a threonylcarbamoyl group on adenosine at position 37 (t(6)A37) in tRNAs that read codons beginning with adenine. Is involved in the transfer of the threonylcarbamoyl moiety of threonylcarbamoyl-AMP (TC-AMP) to the N6 group of A37, together with TsaE and TsaB. TsaD likely plays a direct catalytic role in this reaction. The chain is tRNA N6-adenosine threonylcarbamoyltransferase from Burkholderia cenocepacia (strain ATCC BAA-245 / DSM 16553 / LMG 16656 / NCTC 13227 / J2315 / CF5610) (Burkholderia cepacia (strain J2315)).